We begin with the raw amino-acid sequence, 271 residues long: MQAACWYVLLLLQPTVYLVTCANLTNGGKSELLKSGNSKSTLKHIWTESSKDLSISRLLSQTFRGKENGTDLDLRYDTPEPYSEQDLWDWLRNSTDLQEPRPRAKRRPIVKTGKFKKMFGWGDFHSNIKTVKLNLLITGKIVDHGNGTFSVYFRHNSTGQGNVSVSLVPPTKIVEFDLAQQTVIDAKDSKSFNCRIEYEKVDKATKNTLCNYDPSKTCYQEQTQSHVSWLCSKPFKVICIYISFYSTDYKLVQKVCPDYNYHSDTPYFPSG.

An N-terminal signal peptide occupies residues 1 to 21 (MQAACWYVLLLLQPTVYLVTC). The interval 22–97 (ANLTNGGKSE…WDWLRNSTDL (76 aa)) is II. Residues Asn23, Asn68, Asn93, Asn146, Asn156, and Asn162 are each glycosylated (N-linked (GlcNAc...) asparagine). Residues 98–176 (QEPRPRAKRR…LVPPTKIVEF (79 aa)) form an III region. Positions 177 to 185 (DLAQQTVID) are IV (linker domain). Residues 186–271 (AKDSKSFNCR…HSDTPYFPSG (86 aa)) form a v (Cys-rich) region.

This sequence belongs to the neurexophilin family. In terms of processing, may be proteolytically processed at the boundary between the N-terminal non-conserved and the central conserved domain in neuron-like cells. In terms of tissue distribution, highest level in brain.

It is found in the secreted. May be signaling molecules that resemble neuropeptides. Ligand for alpha-neurexins. This chain is Neurexophilin-1 (Nxph1), found in Rattus norvegicus (Rat).